We begin with the raw amino-acid sequence, 326 residues long: tRNA uridine(34) hydroxylase (326 aa).

The Rhodanese domain occupies 123-217 (ADPEVFVVDT…YLEEVPEEES (95 aa)). Cys177 serves as the catalytic Cysteine persulfide intermediate. A disordered region spans residues 293–326 (AVRGEQHVGGESAKQRQQRRAEKLAKKDVQRKQA). The segment covering 311-326 (RRAEKLAKKDVQRKQA) has biased composition (basic and acidic residues).

This sequence belongs to the TrhO family.

It catalyses the reaction uridine(34) in tRNA + AH2 + O2 = 5-hydroxyuridine(34) in tRNA + A + H2O. In terms of biological role, catalyzes oxygen-dependent 5-hydroxyuridine (ho5U) modification at position 34 in tRNAs. This Vibrio campbellii (strain ATCC BAA-1116) protein is tRNA uridine(34) hydroxylase.